A 132-amino-acid chain; its full sequence is Histone H2A.1 (132 aa).

S2 carries the N-acetylserine modification. K5 and K8 each carry N6-acetyllysine. K14 and K22 each carry N6-succinyllysine. Q106 carries the post-translational modification N5-methylglutamine. K120 carries the post-translational modification N6-malonyllysine; alternate. K127 is covalently cross-linked (Glycyl lysine isopeptide (Lys-Gly) (interchain with G-Cter in SUMO)). S129 is subject to Phosphoserine. The short motif at 129-130 (SQ) is the [ST]-Q motif element.

The protein belongs to the histone H2A family. The nucleosome is a histone octamer containing two molecules each of H2A, H2B, H3 and H4 assembled in one H3-H4 heterotetramer and two H2A-H2B heterodimers. The octamer wraps approximately 147 bp of DNA. In terms of processing, phosphorylated to form H2AS128ph (gamma-H2A) in response to DNA double-strand breaks (DSBs) generated by exogenous genotoxic agents and by stalled replication forks. Phosphorylation is dependent on the DNA damage checkpoint kinases MEC1/ATR and TEL1/ATM, spreads on either side of a detected DSB site and may mark the surrounding chromatin for recruitment of proteins required for DNA damage signaling and repair. Gamma-H2A interacts with ARP4, a shared component of the NuA4 histone acetyltransferase complex and the INO80 and SWR1 chromatin remodeling complexes, and serves to recruit first NuA4, mediating histone H4 acetylation, and subsequently the INO80/SWR1 complexes, facilitating DNA resection, to DSB sites. Gamma-H2A is required for sequestering cohesin around the break site, which is important for efficient post-replicative double-strand break repair by homologous recombination, holding the damaged chromatid close to its undamaged sister template. Gamma-H2A is removed from the DNA prior to the strand invasion-primer extension step of the repair process and subsequently dephosphorylated by PPH3, a component of the histone H2A phosphatase complex (HTP-C). Dephosphorylation is necessary for efficient recovery from the DNA damage checkpoint. Post-translationally, N-acetylated by NAT4. Acetylated by ESA1, a component of the NuA4 histone acetyltransferase (HAT) complex, to form H2AK4ac and H2AK7ac. In terms of processing, glutamine methylation at Gln-106 (H2AQ105me) by NOP1 is specifically dedicated to polymerase I. It is present at 35S ribosomal DNA locus and impairs binding of the FACT complex. Post-translationally, sumoylated to from H2AK126su. May lead to transcriptional repression.

It is found in the nucleus. The protein localises to the chromosome. Functionally, core component of nucleosome which plays a central role in DNA double strand break (DSB) repair. Nucleosomes wrap and compact DNA into chromatin, limiting DNA accessibility to the cellular machineries which require DNA as a template. Histones thereby play a central role in transcription regulation, DNA repair, DNA replication and chromosomal stability. DNA accessibility is regulated via a complex set of post-translational modifications of histones, also called histone code, and nucleosome remodeling. This Saccharomyces cerevisiae (strain ATCC 204508 / S288c) (Baker's yeast) protein is Histone H2A.1 (HTA1).